Reading from the N-terminus, the 35-residue chain is Photosystem II reaction center protein T (35 aa).

Residues 3-23 (ALVYTFLLVSTLGIIFFAIFF) traverse the membrane as a helical segment.

It belongs to the PsbT family. PSII is composed of 1 copy each of membrane proteins PsbA, PsbB, PsbC, PsbD, PsbE, PsbF, PsbH, PsbI, PsbJ, PsbK, PsbL, PsbM, PsbT, PsbY, PsbZ, Psb30/Ycf12, at least 3 peripheral proteins of the oxygen-evolving complex and a large number of cofactors. It forms dimeric complexes.

It is found in the plastid. Its subcellular location is the chloroplast thylakoid membrane. Functionally, found at the monomer-monomer interface of the photosystem II (PS II) dimer, plays a role in assembly and dimerization of PSII. PSII is a light-driven water plastoquinone oxidoreductase, using light energy to abstract electrons from H(2)O, generating a proton gradient subsequently used for ATP formation. This Stangeria eriopus (Natal grass cycad) protein is Photosystem II reaction center protein T.